The primary structure comprises 201 residues: Recombination protein RecR (201 aa).

The C4-type zinc finger occupies 60–75 (CSRCFHFTDAEECSIC). Residues 83-178 (GEICVVETTA…RVSRIAYGIP (96 aa)) enclose the Toprim domain.

The protein belongs to the RecR family.

May play a role in DNA repair. It seems to be involved in an RecBC-independent recombinational process of DNA repair. It may act with RecF and RecO. The sequence is that of Recombination protein RecR from Syntrophobacter fumaroxidans (strain DSM 10017 / MPOB).